Consider the following 842-residue polypeptide: DNA mismatch repair protein MutS (842 aa).

596–603 (GPNMSGKS) is a binding site for ATP.

This sequence belongs to the DNA mismatch repair MutS family.

In terms of biological role, this protein is involved in the repair of mismatches in DNA. It is possible that it carries out the mismatch recognition step. This protein has a weak ATPase activity. This is DNA mismatch repair protein MutS from Exiguobacterium sp. (strain ATCC BAA-1283 / AT1b).